The primary structure comprises 156 residues: Putative pre-16S rRNA nuclease (156 aa).

This sequence belongs to the YqgF nuclease family.

Its subcellular location is the cytoplasm. In terms of biological role, could be a nuclease involved in processing of the 5'-end of pre-16S rRNA. This is Putative pre-16S rRNA nuclease from Albidiferax ferrireducens (strain ATCC BAA-621 / DSM 15236 / T118) (Rhodoferax ferrireducens).